The sequence spans 450 residues: MREIISIHIGQAGIQVGNACWELYCLEHGIEPDGTMPSDTSVGVAHDAFNTFFSETGSGKHVPRAIFVDLEPTVIDEVRTGSYRQLFHPEQLISGKEDAANNFARGHYTVGKEIVDLCLDRVRKLADNCTGLQGFLVFNAVGGGTGSGLGSLLLERLSVDYGKKSKLGFTIYPSPQVSTAVVEPYNSVLSTHSLLEHTDVAVLLDNEAIYDICRRSLDIERPTYTNLNRLISQIISSLTTSLRFDGAINVDVTEFQTNLVPYPRIHFMLSSYAPVISAEKAYHEQLSVPEITNAVFEPSSMMAKCDPRHGKYMACCLMYRGDVVPKDVNAAVATIKTKRTVQFVDWCPTGFKCGINYQPPSVVPGGDLAKVQRAVCMISNNTAVAEVFSRIDHKFDLMYAKRAFVHWYVGEGMEEGEFSEAREDLAALEKDYEEVGAEGADDEGDEGDDY.

7 residues coordinate GTP: Q11, E71, G144, T145, T179, N206, and N228. E71 provides a ligand contact to Mg(2+). E254 is an active-site residue.

The protein belongs to the tubulin family. Dimer of alpha and beta chains. A typical microtubule is a hollow water-filled tube with an outer diameter of 25 nm and an inner diameter of 15 nM. Alpha-beta heterodimers associate head-to-tail to form protofilaments running lengthwise along the microtubule wall with the beta-tubulin subunit facing the microtubule plus end conferring a structural polarity. Microtubules usually have 13 protofilaments but different protofilament numbers can be found in some organisms and specialized cells. The cofactor is Mg(2+). Post-translationally, undergoes a tyrosination/detyrosination cycle, the cyclic removal and re-addition of a C-terminal tyrosine residue by the enzymes tubulin tyrosine carboxypeptidase (TTCP) and tubulin tyrosine ligase (TTL), respectively.

It localises to the cytoplasm. It is found in the cytoskeleton. The enzyme catalyses GTP + H2O = GDP + phosphate + H(+). Its function is as follows. Tubulin is the major constituent of microtubules, a cylinder consisting of laterally associated linear protofilaments composed of alpha- and beta-tubulin heterodimers. Microtubules grow by the addition of GTP-tubulin dimers to the microtubule end, where a stabilizing cap forms. Below the cap, tubulin dimers are in GDP-bound state, owing to GTPase activity of alpha-tubulin. This chain is Tubulin alpha-6 chain (TUBA6), found in Zea mays (Maize).